A 188-amino-acid chain; its full sequence is MHRARWLTPVIPALWEAEAGRSRGQEIETILANKKQSAMPWDQDPEQSTGNYSEDEQNGKQKWREEGEAGRKREREKEEKNEKELQDEQENKRKRENEKQKQYPEKRLVSKSLMHTLWAKFKLNRCPTIQESLSLSFEFDMTHKQISQWFCKTRKKYNKEMSKRKHKKKHMRWRSLCCQGWSRTPALK.

A disordered region spans residues 28-106; sequence ETILANKKQS…NEKQKQYPEK (79 aa). A compositionally biased stretch (basic and acidic residues) spans 57-106; sequence QNGKQKWREEGEAGRKREREKEEKNEKELQDEQENKRKRENEKQKQYPEK. Residues 102–161 constitute a DNA-binding region (homeobox); sequence QYPEKRLVSKSLMHTLWAKFKLNRCPTIQESLSLSFEFDMTHKQISQWFCKTRKKYNKEM.

It localises to the nucleus. This Homo sapiens (Human) protein is NANOG neighbor homeobox (NANOGNB).